Reading from the N-terminus, the 183-residue chain is MVDEIIKSMQSKMDKTVDALKKDFGTIRTGKANPMMVEDVRVDYYGTLTPLNQLGKIACPEPRVILITPFEKGMLKDIEKAIFAASLGLTPNNDGSSIRINIPELTGERRKELAKVVKQKAEEKKVAIRNIRRDANDELKKHQSEMSQDEVKGHQDKIQKITDSYIAKLGDLEKEKEKEITTL.

The segment at 134-156 (DANDELKKHQSEMSQDEVKGHQD) is disordered.

This sequence belongs to the RRF family.

It localises to the cytoplasm. Its function is as follows. Responsible for the release of ribosomes from messenger RNA at the termination of protein biosynthesis. May increase the efficiency of translation by recycling ribosomes from one round of translation to another. The sequence is that of Ribosome-recycling factor from Leptospira biflexa serovar Patoc (strain Patoc 1 / Ames).